Reading from the N-terminus, the 435-residue chain is 5-methylthioadenosine/S-adenosylhomocysteine deaminase (435 aa).

Residues H65 and H67 each contribute to the Zn(2+) site. 3 residues coordinate substrate: E94, R150, and H189. H216 is a Zn(2+) binding site. Residues E219 and D304 each coordinate substrate. D304 is a Zn(2+) binding site.

The protein belongs to the metallo-dependent hydrolases superfamily. MTA/SAH deaminase family. Zn(2+) serves as cofactor.

It catalyses the reaction S-adenosyl-L-homocysteine + H2O + H(+) = S-inosyl-L-homocysteine + NH4(+). The enzyme catalyses S-methyl-5'-thioadenosine + H2O + H(+) = S-methyl-5'-thioinosine + NH4(+). Catalyzes the deamination of 5-methylthioadenosine and S-adenosyl-L-homocysteine into 5-methylthioinosine and S-inosyl-L-homocysteine, respectively. Is also able to deaminate adenosine. The protein is 5-methylthioadenosine/S-adenosylhomocysteine deaminase of Bacillus thuringiensis (strain Al Hakam).